A 516-amino-acid chain; its full sequence is Zinc finger protein 83 (516 aa).

Residues 1–20 (MHGRKDDAQKQPVKNQLGLN) form a disordered region. Residues 93 to 115 (YKCSERGKAFHQGLHFTIHQIIH) form a C2H2-type 1; degenerate zinc finger. 14 C2H2-type zinc fingers span residues 121–143 (FKCD…QRIH), 149–171 (YKCN…RRIH), 177–199 (YKCN…QRIH), 205–227 (YKCN…RTIH), 233–255 (YECN…LIIH), 261–283 (YRCN…QRIH), 289–311 (YKCN…WRIH), 317–339 (YKCN…WRIH), 345–367 (YKCN…LIIH), 373–395 (YKCD…HRIH), 401–423 (YKCD…WRIH), 429–451 (YKCN…RKIH), 457–479 (FKCN…HAIH), and 485–507 (FKCN…QRFH).

This sequence belongs to the krueppel C2H2-type zinc-finger protein family.

The protein resides in the nucleus. May be involved in transcriptional regulation. The protein is Zinc finger protein 83 (ZNF83) of Homo sapiens (Human).